An 84-amino-acid polypeptide reads, in one-letter code: MSSGGLLLLLGLLTLWAELTPISGHDRPKFCYLPADPGECLAHMRSFYYDSESKKCKEFIYGGCHGNANKFPSRDKCRQTCGGK.

Residues 1 to 24 (MSSGGLLLLLGLLTLWAELTPISG) form the signal peptide. The region spanning 31–81 (CYLPADPGECLAHMRSFYYDSESKKCKEFIYGGCHGNANKFPSRDKCRQTC) is the BPTI/Kunitz inhibitor domain. 3 disulfide bridges follow: Cys31/Cys81, Cys40/Cys64, and Cys56/Cys77.

As to expression, expressed by the venom gland.

Its subcellular location is the secreted. In terms of biological role, serine protease inhibitor that has activity against chymotrypsin (Ki=4.77 nM) but not against trypsin. This is Kunitz-type serine protease inhibitor B1 from Daboia siamensis (Eastern Russel's viper).